A 106-amino-acid polypeptide reads, in one-letter code: Ferredoxin (106 aa).

[3Fe-4S] cluster contacts are provided by Cys9 and Cys17. [4Fe-4S] cluster is bound by residues Cys21, Cys40, Cys43, and Cys46. Positions 31–60 constitute a 4Fe-4S ferredoxin-type domain; the sequence is RMLYIHPDECVDCGACEPVCPVEAIYYEDD. Cys50 is a binding site for [3Fe-4S] cluster. A disordered region spans residues 84 to 106; sequence GAAKVGKVDRDVEPVSSLPPQGE.

It depends on [4Fe-4S] cluster as a cofactor. Requires [3Fe-4S] cluster as cofactor.

Functionally, ferredoxins are iron-sulfur proteins that transfer electrons in a wide variety of metabolic reactions. The protein is Ferredoxin (fdxA) of Saccharopolyspora erythraea (Streptomyces erythraeus).